The following is a 382-amino-acid chain: Alcohol dehydrogenase 4 (382 aa).

The protein belongs to the iron-containing alcohol dehydrogenase family. Homodimer. It depends on Zn(2+) as a cofactor. Fe(2+) is required as a cofactor.

Its subcellular location is the mitochondrion. It carries out the reaction a primary alcohol + NAD(+) = an aldehyde + NADH + H(+). The catalysed reaction is a secondary alcohol + NAD(+) = a ketone + NADH + H(+). Its activity is regulated as follows. Inhibited by EDTA. Its function is as follows. Reduces acetaldehyde to ethanol during glucose fermentation. Specific for ethanol. Shows drastically reduced activity towards primary alcohols from 4 carbon atoms upward. Isomers of aliphatic alcohol, as well as secondary alcohols and glycerol are not used at all. In Saccharomyces cerevisiae (strain YJM789) (Baker's yeast), this protein is Alcohol dehydrogenase 4 (ADH4).